The primary structure comprises 425 residues: UBX domain-containing protein 4 (425 aa).

A disordered region spans residues 224-257; the sequence is TPIPSLPSTPSSYQNLPSQSLTGESLPTVSNQEK. Residues 236-254 show a composition bias toward polar residues; it reads YQNLPSQSLTGESLPTVSN. Ser338 is modified (phosphoserine). The region spanning 341 to 390 is the UBX domain; that stretch reads PLPSSAIVKFDFGNGKSIVHEFSKDDNIETLRAFVASHLSPEESTSFQLT.

The protein resides in the cytoplasm. It is found in the nucleus. In terms of biological role, involved in CDC48-dependent protein degradation through the ubiquitin/proteasome pathway. This is UBX domain-containing protein 4 (ubx4) from Schizosaccharomyces pombe (strain 972 / ATCC 24843) (Fission yeast).